We begin with the raw amino-acid sequence, 263 residues long: Ribosomal RNA large subunit methyltransferase E (263 aa).

5 residues coordinate S-adenosyl-L-methionine: G50, W52, D68, N84, and D109. K149 serves as the catalytic Proton acceptor. Residues P196 to E254 enclose the TRAM domain.

The protein belongs to the class I-like SAM-binding methyltransferase superfamily. RNA methyltransferase RlmE family.

The protein resides in the cytoplasm. It catalyses the reaction uridine(2552) in 23S rRNA + S-adenosyl-L-methionine = 2'-O-methyluridine(2552) in 23S rRNA + S-adenosyl-L-homocysteine + H(+). Functionally, specifically methylates the uridine in position 2552 of 23S rRNA at the 2'-O position of the ribose in the fully assembled 50S ribosomal subunit. This is Ribosomal RNA large subunit methyltransferase E from Methanosarcina barkeri (strain Fusaro / DSM 804).